A 488-amino-acid chain; its full sequence is MMFTKSTALALAAIVALSNVNAFSTSIHQPITSKAAHITSSSSLQAANNGLDTDTTLPSFSTKEEYTSYLQKAGRLPSGFAVGTAKGTFVSVEAPALGPLPIKATVIHLTEGPTDSWAAVFTKQSGCPVKVGKARLSGGHPLQALVINNKVSNVCPGGDGIAAAESVCAAVASSLNLPGGANSVLPSSTGVIGWRLPAKELAEDVAPRAIEALQTESAYAAAEAIMTTDRYPKLRSKTLSDGVRVVGVAKGAGMIEPNMATMLGYIMTDATIEKSKLQTMLTEACNRSFNSISVDGDESTSDTVVAIASGLKPLSSEDELKDALFEVCEGLSADLVRNGEGTGHVIRVTISNFPGSEYDARRMGRHLVNSPLVKCAISGNDPNTGRIAGAIGSFMGKFFPTESVAEMSLTLGGRTIFNNGQFVLEGDAVEKELSGHMSDAQLGEHDDFPKHQKFVEIGVDFGGSGSDVIVLGSDLTKEYVEVNADYRS.

Substrate is bound by residues T227, K250, T261, E340, N483, and S488. The active-site Nucleophile is T261.

This sequence belongs to the ArgJ family. Heterodimer of an alpha and a beta chain. In terms of processing, the alpha and beta chains are autoproteolytically processed from a single precursor protein within the mitochondrion.

The protein resides in the mitochondrion matrix. The catalysed reaction is N(2)-acetyl-L-ornithine + L-glutamate = N-acetyl-L-glutamate + L-ornithine. The enzyme catalyses L-glutamate + acetyl-CoA = N-acetyl-L-glutamate + CoA + H(+). It functions in the pathway amino-acid biosynthesis; L-arginine biosynthesis; L-ornithine and N-acetyl-L-glutamate from L-glutamate and N(2)-acetyl-L-ornithine (cyclic): step 1/1. It participates in amino-acid biosynthesis; L-arginine biosynthesis; N(2)-acetyl-L-ornithine from L-glutamate: step 1/4. Its function is as follows. Catalyzes two activities which are involved in the cyclic version of arginine biosynthesis: the synthesis of acetylglutamate from glutamate and acetyl-CoA, and of ornithine by transacetylation between acetylornithine and glutamate. This Thalassiosira pseudonana (Marine diatom) protein is Arginine biosynthesis bifunctional protein ArgJ, mitochondrial.